The chain runs to 197 residues: Probable GTP-binding protein EngB (197 aa).

An EngB-type G domain is found at 25–197 (SAPEIAFAGR…VRDEFFKFTR (173 aa)). GTP-binding positions include 33-40 (GRSNVGKS), 60-64 (GCTRQ), 79-82 (DLPG), 146-149 (TKID), and 177-179 (ISV). 2 residues coordinate Mg(2+): Ser40 and Thr62.

This sequence belongs to the TRAFAC class TrmE-Era-EngA-EngB-Septin-like GTPase superfamily. EngB GTPase family. Mg(2+) serves as cofactor.

Functionally, necessary for normal cell division and for the maintenance of normal septation. The polypeptide is Probable GTP-binding protein EngB (Wolbachia sp. subsp. Brugia malayi (strain TRS)).